We begin with the raw amino-acid sequence, 274 residues long: uncharacterized protein (274 aa).

A disordered region spans residues 253–274 (QTGDVRTTEGTALTDDTTKRNI).

This is an uncharacterized protein from Deinococcus radiodurans (strain ATCC 13939 / DSM 20539 / JCM 16871 / CCUG 27074 / LMG 4051 / NBRC 15346 / NCIMB 9279 / VKM B-1422 / R1).